A 556-amino-acid polypeptide reads, in one-letter code: MKSDIEIAQSVPLKPITEIVKKVGIDGDDLELYGNYKAKLSFEKIKSVKGNKPGKLILVTAINPTPAGEGKSTMSIGLADALTKIGKKTMLALREPSLGPVMGIKGGAAGGGYAQVLPMEDINLHFTGDMHAITTAHNALSALIDNHLQQGNELGIDPRRIIWKRVLDLNDRSLRQVIVGLGSPVNGVPREDGFDITVASEVMAILCLATDLKDLKARLANIVIAYRYDKSPVYVRDLKVEGALALILKDAIKPNLVQTIYGTPAFVHGGPFANIAHGCNSVLATSTALRLADYTVTEAGFGADLGAEKFLNIKTPNLPKAPDAVVIVATLRALKMHGGVAKADLTFENTAAVRSGFANLKRHVENIRKFNIPVVVAINEFVTDTKAEIQVLKELCAEIAVPVELASVWAKGADGGIALANAVVSAIAEESAAYKRLYADKDSLEEKLRAIVTEIYGGRTVQFGPKAKNQLKQFAQYGWDQLPVCMAKTQYSFSDDPSLLGAPDQFDITIRELVPKTGAGFIVALTGDVMTMPGLPKIPAAMKMDVTEDGTAVGLF.

65 to 72 (TPAGEGKS) provides a ligand contact to ATP.

This sequence belongs to the formate--tetrahydrofolate ligase family.

The catalysed reaction is (6S)-5,6,7,8-tetrahydrofolate + formate + ATP = (6R)-10-formyltetrahydrofolate + ADP + phosphate. It functions in the pathway one-carbon metabolism; tetrahydrofolate interconversion. In Streptococcus equi subsp. zooepidemicus (strain MGCS10565), this protein is Formate--tetrahydrofolate ligase.